Consider the following 374-residue polypeptide: DNA replication and repair protein RecF (374 aa).

ATP is bound at residue 30 to 37; that stretch reads GENAQGKT.

Belongs to the RecF family.

It is found in the cytoplasm. Functionally, the RecF protein is involved in DNA metabolism; it is required for DNA replication and normal SOS inducibility. RecF binds preferentially to single-stranded, linear DNA. It also seems to bind ATP. The chain is DNA replication and repair protein RecF from Pediococcus pentosaceus (strain ATCC 25745 / CCUG 21536 / LMG 10740 / 183-1w).